Reading from the N-terminus, the 415-residue chain is uncharacterized protein (415 aa).

[4Fe-4S] cluster-binding residues include Cys276 and Cys316.

In terms of assembly, homodimer. Requires [4Fe-4S] cluster as cofactor.

This is an uncharacterized protein from Methanocaldococcus jannaschii (strain ATCC 43067 / DSM 2661 / JAL-1 / JCM 10045 / NBRC 100440) (Methanococcus jannaschii).